A 400-amino-acid chain; its full sequence is Ubiquitin-like modifier-activating enzyme 5 (400 aa).

ATP-binding residues include Gly-76, Asp-97, Lys-120, Asn-143, and Asn-177. Zn(2+) is bound by residues Cys-219 and Cys-222. Residue Cys-243 is the Glycyl thioester intermediate of the active site. Positions 296 and 301 each coordinate Zn(2+).

It belongs to the ubiquitin-activating E1 family. UBA5 subfamily.

In terms of biological role, E1-like enzyme which activates UFM1. This is Ubiquitin-like modifier-activating enzyme 5 from Drosophila virilis (Fruit fly).